Consider the following 89-residue polypeptide: Neuropeptide S (89 aa).

Residues 1-23 (MIGSLKFNFILFLLISTMHMFWC) form the signal peptide. Residues 24 to 67 (HPISSSKVPGKSDYFVILLNSCPTRMDRRVGLDFLKPILEKTLM) constitute a propeptide that is removed on maturation.

The protein localises to the secreted. Its function is as follows. Modulates arousal and anxiety. May play an important anorexigenic role. Binds to its receptor NPSR1 with nanomolar affinity to increase intracellular calcium concentrations. This chain is Neuropeptide S (NPS), found in Bos taurus (Bovine).